A 536-amino-acid chain; its full sequence is CRISPR-associated DNA-binding protein Cas12m (536 aa).

Residues 1 to 59 form a recognition domain (REC1-N) region; that stretch reads MPFGKKARHVKAYQFGADAPQEGMEAVLEQHRLRTDYYNALVEMELRQREERTALLANL. The tract at residues 60–105 is recognition domain (REC2); it reads AAESGLESPNQVYERLKAAGEKGIRKHPEYVAARERQKALYGHPRL. The segment at 106–159 is recognition domain (REC1-C); it reads LELQSRQREERNALRRSFGAKGLYSSNYLDVERAFDKARQSPELRFRRYSPHEG. The tract at residues 160–257 is wedge domain (WED); the sequence is RLAVLYTEGL…RWTVSVVVEV (98 aa). The segment at 258–270 is linker; the sequence is EGPPVASPTGRGA. The interval 271-481 is ruvC-I; it reads VAVDLGWRRV…QRGKPVRKLN (211 aa). The interval 482–516 is target nucleic-acid binding (TNB); the sequence is PAHTTTDCHACGGALVGDPAKELRLYCPTCERFYD. The Zn(2+) site is built by cysteine 489, cysteine 492, cysteine 508, and cysteine 511. Positions 517-536 are ruvC-II; that stretch reads QDENAARNLLRRAQEVQAQV. Aspartate 518 contacts Mg(2+).

It belongs to the CRISPR-associated DNA-binding protein Cas12m family. Mg(2+) serves as cofactor. Requires Zn(2+) as cofactor.

With respect to regulation, pre-crRNA processing is inhibited by EDTA. Its function is as follows. CRISPR (clustered regularly interspaced short palindromic repeat), is an adaptive immune system that provides protection against mobile genetic elements (viruses, transposable elements and conjugative plasmids). CRISPR clusters contain sequences complementary to antecedent mobile elements and target invading nucleic acids. CRISPR clusters are transcribed and processed into CRISPR RNA (crRNA). Recognizes a short motif in the CRISPR repeat sequences (the 5' PAM or protospacer adjacent motif, 5'-TT/CN-3' in this organism) to help distinguish self versus nonself, as targets within the bacterial CRISPR locus do not have PAMs. Cas12m-crRNA binds DNA in a PAM-dependent, crRNA-guided fashion. DNA-binding probably inhibits transcription, leading to gene silencing. No dsDNA, ssDNA or RNA nuclease activity is seen for the crRNA-Cas12m complex. Upon expression in E.coli as a CRISPR region preferentially binds to its associated crRNA. Is required to process pre-crRNA to mature crRNA without a tracrRNA; processing is Mg(2+)-dependent and does not require the predicted RuvC domain catalytic site. The chain is CRISPR-associated DNA-binding protein Cas12m from Allomeiothermus silvanus (strain ATCC 700542 / DSM 9946 / NBRC 106475 / NCIMB 13440 / VI-R2) (Thermus silvanus).